The following is a 462-amino-acid chain: Zinc finger CCCH domain-containing protein 8 (462 aa).

6 C3H1-type zinc fingers span residues 105–133 (RPGEKDCAFYMMTRTCKFGGSCKFDHPQW), 156–184 (QEGEPDCPFFMKTGKCKFGSKCKFNHPKE), 209–237 (RPSEPLCSFYAKTGKCKFRAMCKFNHPKD), 288–316 (RPGEVDCPFYMKMGSCKFGSTCRFNHPDR), 367–395 (RPGATVCDFYMKTGFCKFADRCKFHHPID), and 422–450 (REDAVVCAFYMKTGVCKFGMQCKFDHPPP).

This is Zinc finger CCCH domain-containing protein 8 from Oryza sativa subsp. japonica (Rice).